We begin with the raw amino-acid sequence, 396 residues long: uncharacterized protein (396 aa).

The protein belongs to the NAD(P)-dependent epimerase/dehydratase family. Requires NAD(+) as cofactor. The cofactor is NADP(+).

Putative nucleotide sugar epimerase/dehydrogenase. This is an uncharacterized protein from Sinorhizobium fredii (strain NBRC 101917 / NGR234).